We begin with the raw amino-acid sequence, 410 residues long: Arginine deiminase (410 aa).

The active-site Amidino-cysteine intermediate is the C400.

Belongs to the arginine deiminase family.

The protein resides in the cytoplasm. The catalysed reaction is L-arginine + H2O = L-citrulline + NH4(+). Its pathway is amino-acid degradation; L-arginine degradation via ADI pathway; carbamoyl phosphate from L-arginine: step 1/2. This Bacillus cereus (strain ATCC 10987 / NRS 248) protein is Arginine deiminase.